The chain runs to 238 residues: Ribonuclease PH (238 aa).

Phosphate-binding positions include Arg-87 and 125–127 (GTR).

The protein belongs to the RNase PH family. Homohexameric ring arranged as a trimer of dimers.

The enzyme catalyses tRNA(n+1) + phosphate = tRNA(n) + a ribonucleoside 5'-diphosphate. Functionally, phosphorolytic 3'-5' exoribonuclease that plays an important role in tRNA 3'-end maturation. Removes nucleotide residues following the 3'-CCA terminus of tRNAs; can also add nucleotides to the ends of RNA molecules by using nucleoside diphosphates as substrates, but this may not be physiologically important. Probably plays a role in initiation of 16S rRNA degradation (leading to ribosome degradation) during starvation. The polypeptide is Ribonuclease PH (Synechococcus elongatus (strain ATCC 33912 / PCC 7942 / FACHB-805) (Anacystis nidulans R2)).